Reading from the N-terminus, the 363-residue chain is Heme A synthase (363 aa).

The next 8 helical transmembrane spans lie at 21–41, 107–127, 138–158, 174–194, 207–227, 268–288, 301–321, and 323–343; these read ALVRGWLYVVLLVLFALVLVG, RLLARSVGLVFALPLLFFWVS, LVGILLLGGLQGAIGWWMVAS, HLTLAALIFTATMVVARGLAP, LAGFIVLLALIQIYLGGLVAG, FVHRLGAYTVFAVALWHMIAT, ATLLFVLVLVQASIGIGTLLM, and VPLHMALTHQGFALIVLGFAA. H270 is a heme binding site. H331 contributes to the heme binding site.

The protein belongs to the COX15/CtaA family. Type 2 subfamily. Interacts with CtaB. Heme b is required as a cofactor.

Its subcellular location is the cell membrane. The catalysed reaction is Fe(II)-heme o + 2 A + H2O = Fe(II)-heme a + 2 AH2. It functions in the pathway porphyrin-containing compound metabolism; heme A biosynthesis; heme A from heme O: step 1/1. Catalyzes the conversion of heme O to heme A by two successive hydroxylations of the methyl group at C8. The first hydroxylation forms heme I, the second hydroxylation results in an unstable dihydroxymethyl group, which spontaneously dehydrates, resulting in the formyl group of heme A. In Mesorhizobium japonicum (strain LMG 29417 / CECT 9101 / MAFF 303099) (Mesorhizobium loti (strain MAFF 303099)), this protein is Heme A synthase.